A 707-amino-acid polypeptide reads, in one-letter code: F-box/WD repeat-containing protein 7 (707 aa).

The tract at residues 1-151 is disordered; sequence MNQELLSVGS…SVTNSSSIVD (151 aa). S26 is subject to Phosphoserine; by ATM. Residues 57–68 show a composition bias toward low complexity; sequence GEVVGVEPRPGG. Over residues 69-84 the composition is skewed to polar residues; that stretch reads QNDSQQGQLEENNNRF. The segment covering 87–129 has biased composition (acidic residues); it reads VDEDSSGNQEEQEEDEEHAGEQDEEDEEEEEMDQESDDFDQSD. Over residues 130–139 the composition is skewed to basic and acidic residues; that stretch reads DSSREDEHTH. A Phosphothreonine modification is found at T205. At S227 the chain carries Phosphoserine; by SGK1. One can recognise an F-box domain in the interval 278 to 324; it reads RDFISLLPKELALYVLSFLEPKDLLQAAQTCRYWRILAEDNLLWREK. WD repeat units lie at residues 378 to 418, 420 to 456, 459 to 498, 500 to 536, 539 to 578, 580 to 618, and 622 to 659; these read GHDD…RTLV, HTGG…CIHT, GHTS…HVLM, HVAA…CLHT, GHTN…HTLT, HQSL…QTLQ, and KHQS…FIRN.

Homodimer; homodimerization plays a role in substrate binding and/or ubiquitination and degradation. Component of the SCF(FBXW7) complex consisting of CUL1, RBX1, SKP1 and FBXW7. Interacts (via F-box domain) with SKP1. Interacts (via F-box domain) with pseudophosphatase STYX; the interaction is direct and prevents FBXW7 interaction with SKP1. Interacts with cyclin-E (CCNE1 or CCNE2). Interacts with PSEN1. Forms a trimeric complex with NOTCH1 and SGK1. Interacts with NOTCH1 intracellular domain/NICD and NOTCH4 intracellular domain/NICD. Interacts with NOTCH2 intracellular domain (N2ICD). Interacts with MYC (when phosphorylated). Interacts with USP28, counteracting ubiquitination of MYC. Interacts with JUN. Found in a complex with JUN and PRR7. Interacts with JUN and PRR7; the interaction inhibits ubiquitination-mediated JUN degradation, promoting its phosphorylation and transcriptional activity. Interacts (when phosphorylated at Thr-205) with PIN1, disrupting FBXW7 dimerization and promoting FBXW7 autoubiquitination and degradation. Interacts with UBE2QL1. Interacts with FAM83D; promotes FBXW7 degradation. Interacts with MYCN; FBXW7 competes with AURKA for binding to unphosphorylated MYCN but not for binding to phosphorylated MYCN. Interacts with STOML1. Interacts with NFE2L1. Interacts with USP36, counteracting ubiquitination of MYC. Interacts with NR1D1. Interacts with RICTOR; mediates RICTOR ubiquitination and degradation. Interacts with USP38, counteracting ubiquitination of MYC. As to quaternary structure, (Microbial infection) Interacts (via WD repeats) with SV40 large T antigen (via CPD region). In terms of processing, phosphorylation at Thr-205 promotes interaction with PIN1, leading to disrupt FBXW7 dimerization and promoting FBXW7 autoubiquitination and degradation. Phosphorylated by ATM at Ser-26 in response to DNA damage, promoting recruitment to DNA damage sites and 'Lys-63'-linked ubiquitination of phosphorylated XRCC4. Ubiquitinated: autoubiquitinates following phosphorylation at Thr-205 and subsequent interaction with PIN1. Ubiquitination leads to its proteasomal degradation. Widely expressed. As to expression, expressed in brain.

The protein localises to the nucleus. It is found in the nucleoplasm. The protein resides in the chromosome. Its subcellular location is the cytoplasm. It localises to the nucleolus. It participates in protein modification; protein ubiquitination. Functionally, substrate recognition component of a SCF (SKP1-CUL1-F-box protein) E3 ubiquitin-protein ligase complex which mediates the ubiquitination and subsequent proteasomal degradation of target proteins. Recognizes and binds phosphorylated sites/phosphodegrons within target proteins and thereafter brings them to the SCF complex for ubiquitination. Identified substrates include cyclin-E (CCNE1 or CCNE2), DISC1, JUN, MYC, NOTCH1 released notch intracellular domain (NICD), NFE2L1, NOTCH2, MCL1, MLST8, RICTOR, and probably PSEN1. Acts as a negative regulator of JNK signaling by binding to phosphorylated JUN and promoting its ubiquitination and subsequent degradation. Involved in bone homeostasis and negative regulation of osteoclast differentiation. Regulates the amplitude of the cyclic expression of hepatic core clock genes and genes involved in lipid and glucose metabolism via ubiquitination and proteasomal degradation of their transcriptional repressor NR1D1; CDK1-dependent phosphorylation of NR1D1 is necessary for SCF(FBXW7)-mediated ubiquitination. Also able to promote 'Lys-63'-linked ubiquitination in response to DNA damage. The SCF(FBXW7) complex facilitates double-strand break repair following phosphorylation by ATM: phosphorylation promotes localization to sites of double-strand breaks and 'Lys-63'-linked ubiquitination of phosphorylated XRCC4, enhancing DNA non-homologous end joining. In Homo sapiens (Human), this protein is F-box/WD repeat-containing protein 7.